Here is a 244-residue protein sequence, read N- to C-terminus: Gas vesicle protein F (244 aa).

Residues 1-109 form an N-terminus region; it reads MTVGLYLYGI…QLKELFAKLS (109 aa). Positions 110 to 233 are C-terminus, modifed ferredoxin fold; sequence GQREVSIKIF…GDRLRIRYNN (124 aa). Positions 234 to 244 are C-tail; sequence LTAPYTFAQLI.

It belongs to the gas vesicle GvpF/GvpL family. As to quaternary structure, binds GvpA.

Its subcellular location is the gas vesicle. Functionally, a minor component of the gas vesicle, may be involved in preventing GvpA aggregation during gas vesicle nucleation. Gas vesicles (GV) are hollow, gas filled proteinaceous nanostructures. During planktonic growth they allow positioning of the organism at a favorable depth for light or nutrient acquisition. This Microcystis aeruginosa (strain PCC 7806) protein is Gas vesicle protein F.